The sequence spans 455 residues: Bifunctional protein GlmU (455 aa).

The tract at residues 1–227 (MKLKAIILAA…YEEIMAVNSR (227 aa)) is pyrophosphorylase. Residues 8–11 (LAAG), K22, Q72, and 77–78 (GT) each bind UDP-N-acetyl-alpha-D-glucosamine. Residue D100 participates in Mg(2+) binding. UDP-N-acetyl-alpha-D-glucosamine-binding residues include G137, E152, N167, and N225. N225 contacts Mg(2+). Residues 228–248 (EQLADVEAIMRRRIAKKHMAN) are linker. Residues 249–455 (GVTIMNPEHV…WTKRKGLLKK (207 aa)) form an N-acetyltransferase region. The UDP-N-acetyl-alpha-D-glucosamine site is built by R330 and K348. The active-site Proton acceptor is the H360. Y363 and N374 together coordinate UDP-N-acetyl-alpha-D-glucosamine. Acetyl-CoA contacts are provided by residues 383 to 384 (NY), S402, C420, and R437.

This sequence in the N-terminal section; belongs to the N-acetylglucosamine-1-phosphate uridyltransferase family. It in the C-terminal section; belongs to the transferase hexapeptide repeat family. Homotrimer. Mg(2+) is required as a cofactor.

The protein resides in the cytoplasm. The enzyme catalyses alpha-D-glucosamine 1-phosphate + acetyl-CoA = N-acetyl-alpha-D-glucosamine 1-phosphate + CoA + H(+). It carries out the reaction N-acetyl-alpha-D-glucosamine 1-phosphate + UTP + H(+) = UDP-N-acetyl-alpha-D-glucosamine + diphosphate. It functions in the pathway nucleotide-sugar biosynthesis; UDP-N-acetyl-alpha-D-glucosamine biosynthesis; N-acetyl-alpha-D-glucosamine 1-phosphate from alpha-D-glucosamine 6-phosphate (route II): step 2/2. Its pathway is nucleotide-sugar biosynthesis; UDP-N-acetyl-alpha-D-glucosamine biosynthesis; UDP-N-acetyl-alpha-D-glucosamine from N-acetyl-alpha-D-glucosamine 1-phosphate: step 1/1. The protein operates within bacterial outer membrane biogenesis; LPS lipid A biosynthesis. In terms of biological role, catalyzes the last two sequential reactions in the de novo biosynthetic pathway for UDP-N-acetylglucosamine (UDP-GlcNAc). The C-terminal domain catalyzes the transfer of acetyl group from acetyl coenzyme A to glucosamine-1-phosphate (GlcN-1-P) to produce N-acetylglucosamine-1-phosphate (GlcNAc-1-P), which is converted into UDP-GlcNAc by the transfer of uridine 5-monophosphate (from uridine 5-triphosphate), a reaction catalyzed by the N-terminal domain. This Alkaliphilus oremlandii (strain OhILAs) (Clostridium oremlandii (strain OhILAs)) protein is Bifunctional protein GlmU.